A 661-amino-acid chain; its full sequence is Zeaxanthin epoxidase, chloroplastic (661 aa).

A chloroplast-targeting transit peptide spans 1–59; it reads MLLFRATLLPSPPFFHKTYFSHLSPVIFSDDPLPVSLQRNRVSGCRKQKWRQIRTLALQ. Residues 81-109 and 359-372 contribute to the FAD site; these read RILI…LVFE and IFTW…LLGD. The region spanning 555–609 is the FHA domain; the sequence is HIIGSISHDDSEGISIHLPFPQVHKTHARIACKDNIFYLTDLQSQYGTWITDNEG.

FAD is required as a cofactor. Expressed in flower buds, lips and leaves. Detected in roots.

It localises to the plastid. Its subcellular location is the chloroplast. The enzyme catalyses all-trans-zeaxanthin + 4 reduced [2Fe-2S]-[ferredoxin] + 2 O2 + 4 H(+) = all-trans-violaxanthin + 4 oxidized [2Fe-2S]-[ferredoxin] + 2 H2O. It functions in the pathway plant hormone biosynthesis; abscisate biosynthesis. Zeaxanthin epoxidase that plays an important role in the xanthophyll cycle and abscisic acid (ABA) biosynthesis. Converts zeaxanthin into antheraxanthin and subsequently violaxanthin. The polypeptide is Zeaxanthin epoxidase, chloroplastic (ZEP) (Oncidium hybrid cultivar (Orchid)).